A 125-amino-acid polypeptide reads, in one-letter code: UPF0389 protein CG9231 (125 aa).

Residues I69–Y88 form a helical membrane-spanning segment. The N-linked (GlcNAc...) asparagine glycan is linked to N112.

The protein belongs to the UPF0389 family.

The protein resides in the membrane. The sequence is that of UPF0389 protein CG9231 from Drosophila melanogaster (Fruit fly).